A 522-amino-acid polypeptide reads, in one-letter code: BTB/POZ domain-containing protein 16 (522 aa).

The 57-residue stretch at 166–222 (INDPAVTRVAFALALKNLYMKEVEMTVDNVLGVLASAHILQFNRLFQKCVNMMMNRL) folds into the BTB domain.

This Mus musculus (Mouse) protein is BTB/POZ domain-containing protein 16 (Btbd16).